The following is a 370-amino-acid chain: Actin-related protein 2/3 complex subunit 1A (370 aa).

6 WD repeats span residues 6–45 (FLLE…WTKA), 50–89 (EHNG…WKPT), 140–179 (PIRS…VDEK), 202–241 (GTGG…QVST), 244–284 (TEFL…TFVS), and 322–365 (LHQN…SSIQ).

This sequence belongs to the WD repeat ARPC1 family. Probable component of the Arp2/3 complex in which it may replace ARPC1B.

The protein localises to the cytoplasm. It is found in the cytoskeleton. Its subcellular location is the nucleus. In terms of biological role, probably functions as a component of the Arp2/3 complex which is involved in regulation of actin polymerization and together with an activating nucleation-promoting factor (NPF) mediates the formation of branched actin networks. In addition to its role in the cytoplasmic cytoskeleton, the Arp2/3 complex also promotes actin polymerization in the nucleus, thereby regulating gene transcription and repair of damaged DNA. The chain is Actin-related protein 2/3 complex subunit 1A (Arpc1a) from Mus musculus (Mouse).